The chain runs to 883 residues: Glutamate receptor 2 (883 aa).

The N-terminal stretch at 1–24 (MQKIMHISVLLSPVLWGLIFGVSS) is a signal peptide. Topologically, residues 25–543 (NSIQIGGLFP…GVFSFLDPLA (519 aa)) are extracellular. Cysteines 78 and 330 form a disulfide. N-linked (GlcNAc...) asparagine glycosylation is found at Asn256, Asn370, Asn406, and Asn413. L-glutamate is bound by residues Pro499, Thr501, and Arg506. The chain crosses the membrane as a helical span at residues 544-564 (YEIWMCIVFAYIGVSVVLFLV). Over 565–591 (SRFSPYEWHTEEFEDGRETQSSESTNE) the chain is Cytoplasmic. The segment at residues 592–607 (FGIFNSLWFSLGAFMQ) is an intramembrane region (helical; Pore-forming). An intramembrane segment occupies 608 to 610 (QGC). Cys610 carries the S-palmitoyl cysteine lipid modification. Residues 611–616 (DISPRS) are Cytoplasmic-facing. Residues 617–637 (LSGRIVGGVWWFFTLIIISSY) traverse the membrane as a helical segment. Over 638–812 (TANLAAFLTV…EKTSALSLSN (175 aa)) the chain is Extracellular. L-glutamate is bound by residues Ser675 and Thr676. Ser683 carries the post-translational modification Phosphoserine; by PKC. Phosphoserine; by PKG is present on Ser717. Glu726 serves as a coordination point for L-glutamate. Cys739 and Cys794 form a disulfide bridge. A helical membrane pass occupies residues 813–833 (VAGVFYILVGGLGLAMLVALI). Over 834-883 (EFCYKSRAEAKRMKVAKNAQNINPSSSQNSQNFATYKEGYNVYGIESVKI) the chain is Cytoplasmic. Cys836 is lipidated: S-palmitoyl cysteine. 2 positions are modified to phosphoserine: Ser860 and Ser863. A required for interaction with IQSEC1 region spans residues 867–877 (ATYKEGYNVYG). A Phosphotyrosine modification is found at Tyr876. Phosphoserine is present on Ser880.

The protein belongs to the glutamate-gated ion channel (TC 1.A.10.1) family. GRIA2 subfamily. As to quaternary structure, homotetramer or heterotetramer of pore-forming glutamate receptor subunits. Tetramers may be formed by the dimerization of dimers. May interact with MPP4. Forms a ternary complex with GRIP1 and CSPG4. Interacts with ATAD1 in an ATP-dependent manner. ATAD1-catalyzed ATP hydrolysis disrupts binding to ATAD1 and to GRIP1 and leads to AMPAR complex disassembly. Interacts with GRIP1 and GRIP2. Interacts with NSF via its C-terminus. Isoform 1, but not isoform 3, interacts with PICK1. Interacts with CACNG2. Interacts with GRIA1 and SYNDIG1. Part of a complex containing GRIA2, NSF and NAPA and/or NAPB. Interacts with SNX27 (via PDZ domain); the interaction is required for recycling to the plasma membrane when endocytosed and prevent degradation in lysosomes. Interacts with LRFN1. Found in a complex with GRIA1, GRIA3, GRIA4, CNIH2, CNIH3, CACNG2, CACNG3, CACNG4, CACNG5, CACNG7 and CACNG8. Interacts with CACNG5. Interacts with OLFM2. Interacts with AP4B1, AP4E1 and AP4M1; probably indirect it mediates the somatodendritic localization of GRIA2 in neurons. Forms a complex with GRIP1, NSG1 and STX12; controls the intracellular fate of AMPAR and the endosomal sorting of the GRIA2 subunit toward recycling and membrane targeting. Interacts with IQSEC1; the interaction is required for ARF6 activation. Interacts (heterotetramer form) with CNIH2 and CNIH3; this interaction promotes expression at the plasma membrane and extensively modulates their gating properties by slowing deactivation and desensitization kinetics. In terms of processing, palmitoylated. Depalmitoylated upon L-glutamate stimulation. Cys-610 palmitoylation leads to Golgi retention and decreased cell surface expression. In contrast, Cys-836 palmitoylation does not affect cell surface expression but regulates stimulation-dependent endocytosis. Post-translationally, ubiquitinated by RNF167, leading to its degradation. Phosphorylation at Tyr-876 is required for interaction with IQSEC1 and ARF6 activation, which in turn triggers AMPAR internalization for persistent synaptic depression. In terms of processing, N-glycosylated.

The protein localises to the cell membrane. Its subcellular location is the postsynaptic cell membrane. It is found in the postsynaptic density membrane. The enzyme catalyses Ca(2+)(in) = Ca(2+)(out). The catalysed reaction is Na(+)(in) = Na(+)(out). Ionotropic glutamate receptor that functions as a ligand-gated cation channel, gated by L-glutamate and glutamatergic agonists such as alpha-amino-3-hydroxy-5-methyl-4-isoxazolepropionic acid (AMPA), quisqualic acid, and kainic acid. L-glutamate acts as an excitatory neurotransmitter at many synapses in the central nervous system and plays an important role in fast excitatory synaptic transmission. Binding of the excitatory neurotransmitter L-glutamate induces a conformation change, leading to the opening of the cation channel, and thereby converts the chemical signal to an electrical impulse upon entry of monovalent and divalent cations such as sodium and calcium. The receptor then desensitizes rapidly and enters in a transient inactive state, characterized by the presence of bound agonist. In the presence of CACNG4 or CACNG7 or CACNG8, shows resensitization which is characterized by a delayed accumulation of current flux upon continued application of L-glutamate. Through complex formation with NSG1, GRIP1 and STX12 controls the intracellular fate of AMPAR and the endosomal sorting of the GRIA2 subunit toward recycling and membrane targeting. The chain is Glutamate receptor 2 from Homo sapiens (Human).